A 243-amino-acid polypeptide reads, in one-letter code: Ribosomal RNA small subunit methyltransferase E 2 (243 aa).

It belongs to the RNA methyltransferase RsmE family.

It is found in the cytoplasm. The enzyme catalyses uridine(1498) in 16S rRNA + S-adenosyl-L-methionine = N(3)-methyluridine(1498) in 16S rRNA + S-adenosyl-L-homocysteine + H(+). Specifically methylates the N3 position of the uracil ring of uridine 1498 (m3U1498) in 16S rRNA. Acts on the fully assembled 30S ribosomal subunit. The polypeptide is Ribosomal RNA small subunit methyltransferase E 2 (rsmE2) (Borreliella burgdorferi (strain ATCC 35210 / DSM 4680 / CIP 102532 / B31) (Borrelia burgdorferi)).